The chain runs to 151 residues: Small ribosomal subunit protein uS15 (151 aa).

Residues 1–20 (MARLHSGKRGSSGSTRPLRT) form a disordered region.

Belongs to the universal ribosomal protein uS15 family. Part of the 30S ribosomal subunit.

This Methanococcus aeolicus (strain ATCC BAA-1280 / DSM 17508 / OCM 812 / Nankai-3) protein is Small ribosomal subunit protein uS15.